The sequence spans 513 residues: Na(+)/H(+) antiporter NhaB (513 aa).

A run of 12 helical transmembrane segments spans residues 23-43 (LALI…PFVA), 52-72 (IFTL…LLAI), 97-117 (LLLM…LFIF), 120-140 (LLLS…AAAF), 144-164 (FLDA…FYGI), 202-222 (LMMH…VGEP), 238-258 (FFLR…LTCL), 303-323 (AIIG…VGLI), 348-368 (TESL…AVII), 391-411 (LFYI…VGTI), 447-467 (ATPN…APLI), and 475-495 (VWMA…CVEF).

This sequence belongs to the NhaB Na(+)/H(+) (TC 2.A.34) antiporter family.

It is found in the cell inner membrane. The enzyme catalyses 2 Na(+)(in) + 3 H(+)(out) = 2 Na(+)(out) + 3 H(+)(in). In terms of biological role, na(+)/H(+) antiporter that extrudes sodium in exchange for external protons. This chain is Na(+)/H(+) antiporter NhaB, found in Escherichia coli (strain 55989 / EAEC).